A 164-amino-acid polypeptide reads, in one-letter code: MAKGKNATRRGERELAFQVLYGLSFTPARSLEELRRSFRMSPDNLARSEESGVPVEACGFSWELVEGVWSNSSALDETISRFSHNWRVDRMGRVELTLLRLAAYELVFRADVPPKVAINEALELSRQFGEGNAKNFINGILDAVAKALENGELQRCAAPSNTSI.

The protein belongs to the NusB family.

In terms of biological role, involved in transcription antitermination. Required for transcription of ribosomal RNA (rRNA) genes. Binds specifically to the boxA antiterminator sequence of the ribosomal RNA (rrn) operons. In Desulfovibrio desulfuricans (strain ATCC 27774 / DSM 6949 / MB), this protein is Transcription antitermination protein NusB.